Consider the following 322-residue polypeptide: Hydroxypyruvate reductase (322 aa).

Residues 160 to 161, aspartate 180, 211 to 212, 238 to 240, and aspartate 264 contribute to the NAD(+) site; these read RI, CP, and NSR. Arginine 240 is a catalytic residue. The active site involves glutamate 269. The Proton donor role is filled by histidine 288.

It belongs to the D-isomer specific 2-hydroxyacid dehydrogenase family.

The enzyme catalyses (R)-glycerate + NAD(+) = 3-hydroxypyruvate + NADH + H(+). The protein operates within carbohydrate metabolism. Functionally, involved in catabolism of D-apiose. Catalyzes the reduction of 3-hydroxypyruvate to glycerate. The chain is Hydroxypyruvate reductase from Blautia hydrogenotrophica (strain DSM 10507 / JCM 14656 / S5a33) (Ruminococcus hydrogenotrophicus).